The chain runs to 304 residues: Glutaminase (304 aa).

Residues S63, N114, E158, N165, Y189, Y240, and V258 each coordinate substrate.

The protein belongs to the glutaminase family. Homotetramer.

It carries out the reaction L-glutamine + H2O = L-glutamate + NH4(+). The sequence is that of Glutaminase from Shewanella baltica (strain OS195).